The chain runs to 194 residues: ECF RNA polymerase sigma factor SigX (194 aa).

The Polymerase core binding signature appears at 32-45 (DLLQEVYIRVLNSY). The segment at residues 136–155 (IQETAKALRFSESKVKTTQH) is a DNA-binding region (H-T-H motif).

Belongs to the sigma-70 factor family. ECF subfamily. Interacts transiently with the RNAP core.

The protein localises to the cell membrane. In terms of biological role, sigma factors are initiation factors that promote the attachment of RNA polymerase (RNAP) to specific initiation sites and are then released. May be involved in the regulation of iron metabolism. Associates with RNAP core during early growth phases, association decreases as cells age. In Bacillus subtilis (strain 168), this protein is ECF RNA polymerase sigma factor SigX (sigX).